The following is a 56-amino-acid chain: Large ribosomal subunit protein bL32c (56 aa).

The segment covering 1-20 (MAAPKKRTSKSRKNMRKSTW) has biased composition (basic residues). Residues 1–28 (MAAPKKRTSKSRKNMRKSTWKRQAATQA) are disordered.

Belongs to the bacterial ribosomal protein bL32 family.

It localises to the plastid. The protein localises to the chloroplast. This is Large ribosomal subunit protein bL32c (rpl32) from Mesostigma viride (Green alga).